We begin with the raw amino-acid sequence, 901 residues long: Serine/threonine-protein kinase-like protein CR4 (901 aa).

The signal sequence occupies residues 1-22 (MDIVPVVALCCCLVLLPSWAYG). 7 consecutive repeat copies span residues 31–66 (VSYGEDGPVFCGLNSDGSHLVTCFGADASVVYGAPS), 70–105 (FVGVTAGDGFACGLLLDTNQPYCWGSNSYVKIGVPQ), 123–158 (LCALRTSVKGFHSVNGDTSVIDCWGYNMTATHTVTG), 160–193 (VSAISAGSVFNCGLFARNRTVFCWGDESVSGVIG), 201–234 (FQSIGAGGYHVCGVLENAQVFCWGRSLEMQQMST), 251–285 (MVSVVGGRFHACGIRSLDHQVACWGFTLQNSTLAP), and 290–328 (VYAIVAGDYFTCGVPAETSLKPMCWGHSGPLALPMAVSP). The 7 X 36 AA repeats stretch occupies residues 31-328 (VSYGEDGPVF…PLALPMAVSP (298 aa)). N-linked (GlcNAc...) asparagine glycosylation is found at N149 and N177. N280 carries an N-linked (GlcNAc...) asparagine glycan. Residues 335–389 (SCSHGYYEYANHGEVGSGSKTCKPANSRLCLPCSVGCPDDSYESSPCNATADRVC) form a TNFR-Cys repeat. Cystine bridges form between C336–C364, C367–C381, and C371–C389. N382 carries N-linked (GlcNAc...) asparagine glycosylation. A helical membrane pass occupies residues 423 to 443 (IFVAEIAFAVILVFSVTAIAC). The Protein kinase domain maps to 504–781 (FSEDSQVGKG…KVTTALERAL (278 aa)). ATP is bound by residues 510–518 (VGKGSFSCV) and K532. D633 functions as the Proton acceptor in the catalytic mechanism. Residues 845-901 (VTSSQRRKSSASEADMDGRTTTDGRNVGSSIGDGLRSLEEEISPASPQENLYLQHNF) form a disordered region. The span at 889–901 (ASPQENLYLQHNF) shows a compositional bias: polar residues.

It belongs to the protein kinase superfamily. Ser/Thr protein kinase family. Homodimer. Autophosphorylated. As to expression, specifically expressed in the epidermal cells of paleas and lemmas.

The protein localises to the cell membrane. It localises to the endosome. Its subcellular location is the multivesicular body membrane. The catalysed reaction is L-seryl-[protein] + ATP = O-phospho-L-seryl-[protein] + ADP + H(+). It catalyses the reaction L-threonyl-[protein] + ATP = O-phospho-L-threonyl-[protein] + ADP + H(+). Functionally, receptor protein kinase. Could play a role in a differentiation signal. Controls formative cell division in meristems. Regulates epidermal cell differentiation in many organs. During floral organogenesis, required to maintain the interlocking of the palea and lemma, and fertility. Triggers culm elongation. This Oryza sativa subsp. japonica (Rice) protein is Serine/threonine-protein kinase-like protein CR4.